The following is a 338-amino-acid chain: Palmitoyltransferase ZDHHC15 (338 aa).

Over 1–20 (MLAGCRVALPRGLRCCQRVL) the chain is Cytoplasmic. Residues 21–41 (SWVPVVIISLVVLWSYYAYVW) traverse the membrane as a helical segment. Over 42–56 (ELCLVTVTNPAEKAA) the chain is Lumenal. A helical membrane pass occupies residues 57 to 77 (YLLIFHTVFLLFIWTYWKAIF). Topologically, residues 78–172 (TPPKQPTKKF…NNCIGYSNYK (95 aa)) are cytoplasmic. Residues 129-179 (RFCDTCQMVKPDRCHHCSVCGMCVLKMDHHCPWVNNCIGYSNYKFFLLFLA) enclose the DHHC domain. Zn(2+) contacts are provided by Cys-131, Cys-134, His-144, Cys-145, Cys-148, Cys-151, and His-158. The S-palmitoyl cysteine intermediate role is filled by Cys-159. Cys-165 provides a ligand contact to Zn(2+). Residues 173 to 193 (FFLLFLAYAMLYCLYIGCTVF) traverse the membrane as a helical segment. Topologically, residues 194-210 (QYFILYWTDTLSNGRAK) are lumenal. The chain crosses the membrane as a helical span at residues 211 to 234 (FHVLFLLFVALMFFISLMFLFGYH). Residues 235-338 (CWLVSLNRTT…TSHITVHIEK (104 aa)) lie on the Cytoplasmic side of the membrane.

The protein belongs to the DHHC palmitoyltransferase family. Autopalmitoylated (in vitro).

It localises to the golgi apparatus membrane. The protein localises to the postsynaptic density. It carries out the reaction L-cysteinyl-[protein] + hexadecanoyl-CoA = S-hexadecanoyl-L-cysteinyl-[protein] + CoA. The enzyme catalyses L-cysteinyl-[protein] + tetradecanoyl-CoA = S-tetradecanoyl-L-cysteinyl-[protein] + CoA. It catalyses the reaction L-cysteinyl-[protein] + octadecanoyl-CoA = S-octadecanoyl-L-cysteinyl-[protein] + CoA. In terms of biological role, palmitoyltransferase that catalyzes the addition of palmitate onto various protein substrates. Has no stringent fatty acid selectivity and in addition to palmitate can also transfer onto target proteins myristate from tetradecanoyl-CoA and stearate from octadecanoyl-CoA. May thereby regulate target proteins association and localization to membranes. In the nervous system, probably catalyzes the palmitoylation of synaptic proteins and is involved in the differentiation of dopaminergic neurons and the development of the diencephalon. The protein is Palmitoyltransferase ZDHHC15 (zdhhc15) of Xenopus laevis (African clawed frog).